A 238-amino-acid polypeptide reads, in one-letter code: Ribonuclease PH (238 aa).

Phosphate-binding positions include Arg86 and 124–126 (GTR).

This sequence belongs to the RNase PH family. In terms of assembly, homohexameric ring arranged as a trimer of dimers.

The enzyme catalyses tRNA(n+1) + phosphate = tRNA(n) + a ribonucleoside 5'-diphosphate. Its function is as follows. Phosphorolytic 3'-5' exoribonuclease that plays an important role in tRNA 3'-end maturation. Removes nucleotide residues following the 3'-CCA terminus of tRNAs; can also add nucleotides to the ends of RNA molecules by using nucleoside diphosphates as substrates, but this may not be physiologically important. Probably plays a role in initiation of 16S rRNA degradation (leading to ribosome degradation) during starvation. The chain is Ribonuclease PH from Vibrio vulnificus (strain CMCP6).